Here is a 44-residue protein sequence, read N- to C-terminus: Photosystem I reaction center subunit IX (44 aa).

Residues 7–27 (YLSVAPVLSTLWFGALAGLLI) form a helical membrane-spanning segment.

Belongs to the PsaJ family.

It is found in the plastid. It localises to the chloroplast thylakoid membrane. May help in the organization of the PsaE and PsaF subunits. This Oryza nivara (Indian wild rice) protein is Photosystem I reaction center subunit IX.